The chain runs to 138 residues: MERLVLTLCTLPLAVASAGCATTPARNLSCYQCFKVSSWTECPPTWCSPLDQVCISNEVVVSFKWSVRVLLSKRCAPRCPNDNMKFEWSPAPMVQGVITRRCCSWALCNRALTPQEGRWALRGGLLLQVGLSLLRALL.

Positions M1–A16 are cleaved as a signal peptide. N27 carries N-linked (GlcNAc...) asparagine glycosylation. Positions L28–R122 constitute a UPAR/Ly6 domain. Intrachain disulfides connect C30/C47 and C103/C108. A lipid anchor (GPI-anchor amidated glycine) is attached at G117. Positions R118–L138 are cleaved as a propeptide — removed in mature form.

It is found in the cell membrane. The polypeptide is Lymphocyte antigen 6L (Homo sapiens (Human)).